A 950-amino-acid chain; its full sequence is Leucine--tRNA ligase (950 aa).

A 'HIGH' region motif is present at residues 41–52 (PYPSGDGLHVGH). The 'KMSKS' region signature appears at 718 to 722 (KMSKS). An ATP-binding site is contributed by lysine 721.

It belongs to the class-I aminoacyl-tRNA synthetase family.

The protein resides in the cytoplasm. It carries out the reaction tRNA(Leu) + L-leucine + ATP = L-leucyl-tRNA(Leu) + AMP + diphosphate. This Rhodopirellula baltica (strain DSM 10527 / NCIMB 13988 / SH1) protein is Leucine--tRNA ligase.